The primary structure comprises 132 residues: Small ribosomal subunit protein uS8 (132 aa).

Belongs to the universal ribosomal protein uS8 family. In terms of assembly, part of the 30S ribosomal subunit. Contacts proteins S5 and S12.

Its function is as follows. One of the primary rRNA binding proteins, it binds directly to 16S rRNA central domain where it helps coordinate assembly of the platform of the 30S subunit. This is Small ribosomal subunit protein uS8 from Geobacillus thermodenitrificans (strain NG80-2).